Consider the following 86-residue polypeptide: Acyl-CoA-binding protein homolog 1 (86 aa).

An ACB domain is found at 1 to 86 (MTLSFDDAAA…VEELIAKYGA (86 aa)). An acyl-CoA contacts are provided by residues lysine 13, 28–32 (YALFK), lysine 50, lysine 54, and tyrosine 73.

It belongs to the ACBP family.

Binds medium- and long-chain acyl-CoA esters with very high affinity and may function as an intracellular carrier of acyl-CoA esters. The polypeptide is Acyl-CoA-binding protein homolog 1 (acbp-1) (Caenorhabditis elegans).